Consider the following 241-residue polypeptide: MDIQLIIESFPKLLAAVPTTLTLAFISLLIGFVVSVPVALMRLSKNRIVSSLAYGYVYIIRSTPLLVQMFLIYYGSAQFRGVLSEVGLWSSFREPWFCAILALALNTAAYTSEIIRGGIQSVSLGQIEAARAVGMSTFLQFRRIVFPIAIRQALPAYGNEVMLIIKSTSLASTITIVEVTGLAKQIISATYSPVEVFIVAGAIYLFITFVVSRLVMLAEWWLNPHMRARVGGTAPKAAETH.

The ABC transmembrane type-1 domain occupies 17-215; that stretch reads VPTTLTLAFI…FITFVVSRLV (199 aa). 5 helical membrane passes run 21 to 41, 52 to 72, 95 to 115, 161 to 181, and 191 to 211; these read LTLA…VALM, LAYG…MFLI, PWFC…SEII, VMLI…EVTG, and YSPV…TFVV.

This sequence belongs to the binding-protein-dependent transport system permease family. HisMQ subfamily.

It localises to the cell inner membrane. Functionally, component of the nopaline active transport system probably consisting of four subunits: Q, M, P and T. This system is also capable of transporting octopine provided that catabolic functions are induced with nopaline. The chain is Nopaline transport system permease protein NocM (nocM) from Agrobacterium fabrum (strain C58 / ATCC 33970) (Agrobacterium tumefaciens (strain C58)).